Here is a 302-residue protein sequence, read N- to C-terminus: uncharacterized protein (302 aa).

A run of 9 helical transmembrane segments spans residues 1–21 (MSWI…LGVI), 33–53 (SLLF…YIYY), 67–87 (FLIE…IFQF), 101–121 (FGII…IILI), 124–144 (FSWL…KTFY), 185–205 (YVTP…VFAI), 220–240 (IIYT…FCLA), 253–273 (LALI…IAIP), and 274–294 (AYIS…ASVI).

This sequence belongs to the TerC family.

Its subcellular location is the cell membrane. This is an uncharacterized protein from Rickettsia bellii (strain RML369-C).